We begin with the raw amino-acid sequence, 449 residues long: FAD-linked oxidoreductase janO (449 aa).

In terms of domain architecture, FAD-binding PCMH-type spans 32-203; sequence PDAQPLAIIK…TRFHLNTRPL (172 aa).

It belongs to the oxygen-dependent FAD-linked oxidoreductase family. FAD serves as cofactor.

Its pathway is secondary metabolite biosynthesis. Functionally, FAD-linked oxidoreductase; part of the gene cluster that mediates the biosynthesis of the indole diterpenes janthitremanes such as shearinine K or shearinine A. The geranylgeranyl diphosphate (GGPP) synthase janG catalyzes the first step in janthitremane biosynthesis via conversion of farnesyl pyrophosphate and isopentyl pyrophosphate into geranylgeranyl pyrophosphate (GGPP). Condensation of indole-3-glycerol phosphate with GGPP by the prenyl transferase janC then forms 3-geranylgeranylindole (3-GGI). Epoxidation by the FAD-dependent monooxygenase janM leads to a epoxidized-GGI that is substrate of the terpene cyclase janB for cyclization to yield paspaline. Paspaline is subsequently converted to 13-desoxypaspaline by the cytochrome P450 monooxygenase janP, via beta-PC-M6 in a series of alpha-face oxidations. The cytochrome P450 monooxygenase janQ is proposed to carry out sequential beta-face oxidation steps at C-7 and C-13 of 13-desoxypaspaline to form paspalicine and paspalinine respectively. The indole diterpene prenyltransferase janD may then convert paspalinine into shearinine K which is substrate of janO and/or additional enzymes for oxidation and cyclization to generate shearinine A. In Penicillium janthinellum (Penicillium vitale), this protein is FAD-linked oxidoreductase janO.